Reading from the N-terminus, the 305-residue chain is tRNA-cytidine(32) 2-sulfurtransferase (305 aa).

Residues 1–20 (MTAVLPLPHPLADPAPRDPR) are disordered. The PP-loop motif signature appears at 59-64 (SGGKDS). [4Fe-4S] cluster is bound by residues cysteine 134, cysteine 137, and cysteine 225. Positions 282-293 (DAPPDLAPDPGA) are enriched in low complexity. Residues 282 to 305 (DAPPDLAPDPGAWLTASDATHDSD) are disordered.

The protein belongs to the TtcA family. In terms of assembly, homodimer. Mg(2+) is required as a cofactor. It depends on [4Fe-4S] cluster as a cofactor.

Its subcellular location is the cytoplasm. The enzyme catalyses cytidine(32) in tRNA + S-sulfanyl-L-cysteinyl-[cysteine desulfurase] + AH2 + ATP = 2-thiocytidine(32) in tRNA + L-cysteinyl-[cysteine desulfurase] + A + AMP + diphosphate + H(+). The protein operates within tRNA modification. Catalyzes the ATP-dependent 2-thiolation of cytidine in position 32 of tRNA, to form 2-thiocytidine (s(2)C32). The sulfur atoms are provided by the cysteine/cysteine desulfurase (IscS) system. The protein is tRNA-cytidine(32) 2-sulfurtransferase of Xanthomonas oryzae pv. oryzae (strain PXO99A).